Reading from the N-terminus, the 607-residue chain is Threonine--tRNA ligase (607 aa).

Residues 1–143 (MRVLYIHAER…SFKPEEARVA (143 aa)) are editing domain. Catalytic stretches follow at residues 193–489 (PRYL…PRLP) and 194–489 (RYLD…PRLP). Zn(2+) is bound by residues Cys286, His337, and His458.

This sequence belongs to the class-II aminoacyl-tRNA synthetase family. As to quaternary structure, homodimer. Requires Zn(2+) as cofactor.

The protein localises to the cytoplasm. It catalyses the reaction tRNA(Thr) + L-threonine + ATP = L-threonyl-tRNA(Thr) + AMP + diphosphate + H(+). In terms of biological role, catalyzes the attachment of threonine to tRNA(Thr) in a two-step reaction: L-threonine is first activated by ATP to form Thr-AMP and then transferred to the acceptor end of tRNA(Thr). Also edits incorrectly charged L-seryl-tRNA(Thr). In Pyrobaculum calidifontis (strain DSM 21063 / JCM 11548 / VA1), this protein is Threonine--tRNA ligase.